Here is a 222-residue protein sequence, read N- to C-terminus: ATP-dependent Clp protease proteolytic subunit 1 (222 aa).

S121 functions as the Nucleophile in the catalytic mechanism. H146 is an active-site residue.

It belongs to the peptidase S14 family. As to quaternary structure, fourteen ClpP subunits assemble into 2 heptameric rings which stack back to back to give a disk-like structure with a central cavity, resembling the structure of eukaryotic proteasomes.

The protein resides in the cytoplasm. It catalyses the reaction Hydrolysis of proteins to small peptides in the presence of ATP and magnesium. alpha-casein is the usual test substrate. In the absence of ATP, only oligopeptides shorter than five residues are hydrolyzed (such as succinyl-Leu-Tyr-|-NHMec, and Leu-Tyr-Leu-|-Tyr-Trp, in which cleavage of the -Tyr-|-Leu- and -Tyr-|-Trp bonds also occurs).. Functionally, cleaves peptides in various proteins in a process that requires ATP hydrolysis. Has a chymotrypsin-like activity. Plays a major role in the degradation of misfolded proteins. This chain is ATP-dependent Clp protease proteolytic subunit 1, found in Thermobifida fusca (strain YX).